Here is a 672-residue protein sequence, read N- to C-terminus: Transketolase (672 aa).

Residue His-35 participates in substrate binding. Thiamine diphosphate is bound by residues His-75 and 124–126; that span reads GPL. Residue Asp-162 participates in Mg(2+) binding. Residues Gly-163 and Asn-192 each contribute to the thiamine diphosphate site. Mg(2+)-binding residues include Asn-192 and Ile-194. His-266, Arg-361, and Ser-388 together coordinate substrate. Residue His-266 coordinates thiamine diphosphate. The active-site Proton donor is the Glu-415. Phe-441 contacts thiamine diphosphate. Substrate-binding residues include His-465, Asp-473, and Arg-524.

This sequence belongs to the transketolase family. As to quaternary structure, homodimer. It depends on Mg(2+) as a cofactor. Requires Ca(2+) as cofactor. The cofactor is Mn(2+). Co(2+) serves as cofactor. Thiamine diphosphate is required as a cofactor.

The enzyme catalyses D-sedoheptulose 7-phosphate + D-glyceraldehyde 3-phosphate = aldehydo-D-ribose 5-phosphate + D-xylulose 5-phosphate. It participates in carbohydrate biosynthesis; Calvin cycle. It functions in the pathway carbohydrate degradation; pentose phosphate pathway. Its function is as follows. Catalyzes the transfer of a two-carbon ketol group from a ketose donor to an aldose acceptor, via a covalent intermediate with the cofactor thiamine pyrophosphate. The polypeptide is Transketolase (tktA) (Rhodobacter capsulatus (strain ATCC BAA-309 / NBRC 16581 / SB1003)).